An 831-amino-acid chain; its full sequence is Translation initiation factor IF-2 (831 aa).

A disordered region spans residues 116 to 157 (IEPLETDKEVEQKQQNTEENKVEVSAKIVQDDEDIPSQIPKK). A compositionally biased stretch (basic and acidic residues) spans 117 to 139 (EPLETDKEVEQKQQNTEENKVEV). One can recognise a tr-type G domain in the interval 329-499 (TRAPVVTVMG…LLIAEMQDLK (171 aa)). Positions 338–345 (GHVDHGKT) are G1. 338–345 (GHVDHGKT) contributes to the GTP binding site. Residues 363-367 (GITQH) form a G2 region. The G3 stretch occupies residues 385 to 388 (DTPG). Residues 385–389 (DTPGH) and 439–442 (NKID) each bind GTP. Positions 439-442 (NKID) are G4. The interval 475–477 (SAL) is G5.

This sequence belongs to the TRAFAC class translation factor GTPase superfamily. Classic translation factor GTPase family. IF-2 subfamily.

It is found in the cytoplasm. One of the essential components for the initiation of protein synthesis. Protects formylmethionyl-tRNA from spontaneous hydrolysis and promotes its binding to the 30S ribosomal subunits. Also involved in the hydrolysis of GTP during the formation of the 70S ribosomal complex. This Rickettsia conorii (strain ATCC VR-613 / Malish 7) protein is Translation initiation factor IF-2.